The chain runs to 292 residues: 4-diphosphocytidyl-2-C-methyl-D-erythritol kinase (292 aa).

K13 is an active-site residue. 97–107 is an ATP binding site; that stretch reads PVAAGLAGGSS. The active site involves D139.

The protein belongs to the GHMP kinase family. IspE subfamily.

It catalyses the reaction 4-CDP-2-C-methyl-D-erythritol + ATP = 4-CDP-2-C-methyl-D-erythritol 2-phosphate + ADP + H(+). It functions in the pathway isoprenoid biosynthesis; isopentenyl diphosphate biosynthesis via DXP pathway; isopentenyl diphosphate from 1-deoxy-D-xylulose 5-phosphate: step 3/6. Functionally, catalyzes the phosphorylation of the position 2 hydroxy group of 4-diphosphocytidyl-2C-methyl-D-erythritol. The chain is 4-diphosphocytidyl-2-C-methyl-D-erythritol kinase from Bacillus thuringiensis (strain Al Hakam).